We begin with the raw amino-acid sequence, 130 residues long: Annexin A1 (130 aa).

An Isoglutamyl lysine isopeptide (Gln-Lys) (interchain with K-?) cross-link involves residue Gln-19. A Phosphoserine; by PKC modification is found at Ser-24. Annexin repeat units follow at residues 37–108 (FDPS…ALLK) and 109–130 (TPAQFDAEELRASMKGLGTDRR). Positions 54, 55, 57, 92, 95, 100, 122, 124, 126, 127, and 130 each coordinate Ca(2+).

It belongs to the annexin family.

Its subcellular location is the nucleus. The protein resides in the cytoplasm. It localises to the cell projection. The protein localises to the cilium. It is found in the basolateral cell membrane. Its subcellular location is the lateral cell membrane. The protein resides in the cell membrane. It localises to the apical cell membrane. The protein localises to the membrane. It is found in the early endosome. Its subcellular location is the cytoplasmic vesicle membrane. The protein resides in the endosome membrane. It localises to the secreted. The protein localises to the extracellular space. It is found in the extracellular exosome. Its subcellular location is the cytoplasmic vesicle. The protein resides in the secretory vesicle lumen. It localises to the phagocytic cup. Plays important roles in the innate immune response as effector of glucocorticoid-mediated responses and regulator of the inflammatory process. Has anti-inflammatory activity. Plays a role in glucocorticoid-mediated down-regulation of the early phase of the inflammatory response. Promotes resolution of inflammation and wound healing. Functions at least in part by activating the formyl peptide receptors and downstream signaling cascades. Promotes chemotaxis of granulocytes and monocytes via activation of the formyl peptide receptors. Contributes to the adaptive immune response by enhancing signaling cascades that are triggered by T-cell activation, regulates differentiation and proliferation of activated T-cells. Promotes the differentiation of T-cells into Th1 cells and negatively regulates differentiation into Th2 cells. Has no effect on unstimulated T-cells. Promotes rearrangement of the actin cytoskeleton, cell polarization and cell migration. Negatively regulates hormone exocytosis via activation of the formyl peptide receptors and reorganization of the actin cytoskeleton. Has high affinity for Ca(2+) and can bind up to eight Ca(2+) ions. Displays Ca(2+)-dependent binding to phospholipid membranes. Plays a role in the formation of phagocytic cups and phagosomes. Plays a role in phagocytosis by mediating the Ca(2+)-dependent interaction between phagosomes and the actin cytoskeleton. This Gallus gallus (Chicken) protein is Annexin A1 (ANXA1).